A 94-amino-acid polypeptide reads, in one-letter code: Large ribosomal subunit protein bL25 (94 aa).

Belongs to the bacterial ribosomal protein bL25 family. In terms of assembly, part of the 50S ribosomal subunit; part of the 5S rRNA/L5/L18/L25 subcomplex. Contacts the 5S rRNA. Binds to the 5S rRNA independently of L5 and L18.

Its function is as follows. This is one of the proteins that binds to the 5S RNA in the ribosome where it forms part of the central protuberance. This Klebsiella pneumoniae subsp. pneumoniae (strain ATCC 700721 / MGH 78578) protein is Large ribosomal subunit protein bL25.